Consider the following 334-residue polypeptide: Phosphoribosylformylglycinamidine cyclo-ligase (334 aa).

The protein belongs to the AIR synthase family.

The protein localises to the cytoplasm. The catalysed reaction is 2-formamido-N(1)-(5-O-phospho-beta-D-ribosyl)acetamidine + ATP = 5-amino-1-(5-phospho-beta-D-ribosyl)imidazole + ADP + phosphate + H(+). Its pathway is purine metabolism; IMP biosynthesis via de novo pathway; 5-amino-1-(5-phospho-D-ribosyl)imidazole from N(2)-formyl-N(1)-(5-phospho-D-ribosyl)glycinamide: step 2/2. This Thermococcus gammatolerans (strain DSM 15229 / JCM 11827 / EJ3) protein is Phosphoribosylformylglycinamidine cyclo-ligase.